The chain runs to 801 residues: tRNA(Met) cytidine acetyltransferase TmcA (801 aa).

ATP contacts are provided by residues glutamine 228, 256 to 265 (GRGKSSAVGL), and arginine 412. The N-acetyltransferase domain maps to 457–637 (EELFLKNEEE…YTVIVVKPLS (181 aa)). Acetyl-CoA-binding positions include 562–564 (IAT), 569–575 (MGKGLGS), and glutamate 602.

Belongs to the RNA cytidine acetyltransferase family. TmcA subfamily.

The protein resides in the cytoplasm. The catalysed reaction is cytidine(34) in elongator tRNA(Met) + acetyl-CoA + ATP + H2O = N(4)-acetylcytidine(34) in elongator tRNA(Met) + ADP + phosphate + CoA + H(+). Its function is as follows. Catalyzes the formation of N(4)-acetylcytidine (ac(4)C) at the wobble position of tRNA(Met), by using acetyl-CoA as an acetyl donor and ATP (or GTP). This chain is tRNA(Met) cytidine acetyltransferase TmcA, found in Thermofilum pendens (strain DSM 2475 / Hrk 5).